The sequence spans 120 residues: Large ribosomal subunit protein bL12 (120 aa).

Belongs to the bacterial ribosomal protein bL12 family. In terms of assembly, homodimer. Part of the ribosomal stalk of the 50S ribosomal subunit. Forms a multimeric L10(L12)X complex, where L10 forms an elongated spine to which 2 to 4 L12 dimers bind in a sequential fashion. Binds GTP-bound translation factors.

Forms part of the ribosomal stalk which helps the ribosome interact with GTP-bound translation factors. Is thus essential for accurate translation. The polypeptide is Large ribosomal subunit protein bL12 (Alkaliphilus metalliredigens (strain QYMF)).